A 1562-amino-acid polypeptide reads, in one-letter code: Pikromycin polyketide synthase component PikAIII (1562 aa).

The Ketosynthase family 3 (KS3) domain occupies 34–464 (HEPVAIVGMA…GTNAHVVLEE (431 aa)). Residues 37 to 1475 (VAIVGMACRL…TPAALAAHLH (1439 aa)) form a module 5 region. The active-site Acyl-thioester intermediate; for beta-ketoacyl synthase activity is the Cys209. Residues His344 and His384 each act as for beta-ketoacyl synthase activity in the active site. Residues 565–866 (FVFPGQGTQW…GGQERLVTSL (302 aa)) are acyltransferase. Ser655 (acyl-ester intermediate; for acyltransferase activity) is an active-site residue. The beta-ketoacyl reductase stretch occupies residues 1116-1293 (GTVLITGGTG…ATSVAWGLWA (178 aa)). NADP(+) is bound by residues 1124–1127 (TGAL), 1147–1150 (SRSG), 1176–1177 (DV), Lys1226, and 1248–1249 (YS). Residue Tyr1263 is the Acyl-ester intermediate; for beta-ketoacyl reductase activity of the active site. The Carrier domain maps to 1403-1478 (PALLTLVRTH…ALAAHLHEAY (76 aa)). Position 1438 is an O-(pantetheine 4'-phosphoryl)serine (Ser1438). A disordered region spans residues 1519 to 1548 (GIEPEPGSGGSDGGAADPGAEPEASIDDLD). A compositionally biased stretch (low complexity) spans 1532 to 1541 (GAADPGAEPE).

As to quaternary structure, homodimer. Pikromycin PKS consists of a combination of multimodular (PikAI and PikAII) and monomodular (PikAIII and PikAIV) polypeptides each coding for a functional synthase subunit which participates in 1 (monomodular) or 2 (multimodular) of the six FAS-like elongation steps required for formation of the polyketide. Module 1, 2, 3, 4, 5, and 6 participating in biosynthesis steps 1, 2, 3, 4, 5, and 6, respectively. It depends on pantetheine 4'-phosphate as a cofactor.

It catalyses the reaction 5 (S)-methylmalonyl-CoA + malonyl-CoA + 5 NADPH + 11 H(+) = 10-deoxymethynolide + 6 CO2 + 5 NADP(+) + 6 CoA + 2 H2O. The enzyme catalyses 6 (S)-methylmalonyl-CoA + malonyl-CoA + 5 NADPH + 12 H(+) = narbonolide + 7 CO2 + 5 NADP(+) + 7 CoA + 2 H2O. Its pathway is antibiotic biosynthesis. Its function is as follows. Involved in the biosynthesis of 12- and 14-membered ring macrolactone antibiotics such as methymycin and neomethymycin, and pikromycin and narbomycin, respectively. Component of the pikromycin PKS which catalyzes the biosynthesis of both precursors 10-deoxymethynolide (12-membered ring macrolactone) and narbonolide (14-membered ring macrolactone). Chain elongation through PikAI, PikAII and PikAIII followed by thioesterase catalyzed termination results in the production of 10-deoxymethynolide, while continued elongation through PikAIV, followed by thioesterase (TE) catalyzed cyclization results in the biosynthesis of the narbonolide. The sequence is that of Pikromycin polyketide synthase component PikAIII from Streptomyces venezuelae.